Reading from the N-terminus, the 418-residue chain is Xanthosine permease (418 aa).

At methionine 1–valine 9 the chain is on the cytoplasmic side. Residues methionine 10 to isoleucine 30 traverse the membrane as a helical segment. Topologically, residues asparagine 31–glycine 41 are periplasmic. The helical transmembrane segment at methionine 42–alanine 62 threads the bilayer. At aspartate 63–arginine 70 the chain is on the cytoplasmic side. 2 helical membrane passes run alanine 71 to aspartate 91 and proline 92 to leucine 112. Residues serine 113 to arginine 136 lie on the Cytoplasmic side of the membrane. Residues valine 137–leucine 157 traverse the membrane as a helical segment. Over serine 158–serine 159 the chain is Periplasmic. A helical membrane pass occupies residues leucine 160–proline 180. At lysine 181 to arginine 209 the chain is on the cytoplasmic side. Residues methionine 210 to phenylalanine 230 form a helical membrane-spanning segment. The Periplasmic portion of the chain corresponds to glycine 231–serine 254. The chain crosses the membrane as a helical span at residues isoleucine 255–leucine 275. The Cytoplasmic segment spans residues lysine 276–arginine 277. Residues phenylalanine 278 to phenylalanine 298 form a helical membrane-spanning segment. At alanine 299–threonine 306 the chain is on the periplasmic side. A helical transmembrane segment spans residues glycine 307–isoleucine 327. The Cytoplasmic segment spans residues serine 328–leucine 348. The chain crosses the membrane as a helical span at residues phenylalanine 349–valine 369. Over aspartate 370–glutamine 381 the chain is Periplasmic. The helical transmembrane segment at threonine 382–phenylalanine 402 threads the bilayer. The Cytoplasmic segment spans residues lysine 403–histidine 418.

It belongs to the major facilitator superfamily. Nucleoside:H(+) symporter (NHS) (TC 2.A.1.10) family.

The protein resides in the cell inner membrane. The enzyme catalyses xanthosine(in) + H(+)(in) = xanthosine(out) + H(+)(out). Transport is abolished by the proton uncoupler 2,4-dinitrophenol. Uptake of xanthosine. Can also transport other nucleosides such as inosine, adenosine, cytidine, uridine and thymidine. Transport is driven by a proton motive force. This chain is Xanthosine permease, found in Escherichia coli (strain K12).